Consider the following 103-residue polypeptide: UPF0145 protein EF_0241 (103 aa).

Belongs to the UPF0145 family.

This is UPF0145 protein EF_0241 from Enterococcus faecalis (strain ATCC 700802 / V583).